Reading from the N-terminus, the 595-residue chain is MRVAPEFYEFLRNRINISDVVRQKVALTRKSGNYVGLCPFHQEKTPSFTVSNSKRFFYCFGCKAAGDVIKFTSNISGLSYNESAIKLAIDYGIEIPKLTAKQKEFYEESDEILNILELANKFFRTQLTPEILHYLHERGITEETVKEFSIGFAPKNNKFEKFFHDKNIDIIKLGKAGLIGKRENGEIYNLFSNRITIPIRNIYNKIVGFGGRVLGEGLPKYLNSPETTVFQKSETLYGEHKAISSSYKKNHSILVEGYFDVIALHQAGFSETVASLGTSVTENHLHKLWRAGDEIILCLDGDNAGIKASIRTINLALPLINSEKKISFIRLPSGLDPDDAVNKNGADFFAKLIDKRISLSEMIWHIEYSGKSFKTAEEKANLEKNLKNYCSKISDSDLKVSYYRFFKDQIWQNLVTTQKKATTKNSNLAPIISSHGYSELEILEHAFCALLVKFPIILEEKDIRDFILNLNFNNKSLEEFRNWYLNEIIDNNVEASEITAIVEKTSFFDIFLLLSKTDNLFLDISFNKNNIRLDLLWQWLHKKYYLINLQQEYAITINSTDNHDFEKVLLYKKEILKIANELQVLNESFINHTIT.

The segment at Cys38–Cys62 adopts a CHC2-type zinc-finger fold. One can recognise a Toprim domain in the interval Asn250–Pro332. Glu256, Asp300, and Asp302 together coordinate Mg(2+).

The protein belongs to the DnaG primase family. In terms of assembly, monomer. Interacts with DnaB. Requires Zn(2+) as cofactor. It depends on Mg(2+) as a cofactor.

The enzyme catalyses ssDNA + n NTP = ssDNA/pppN(pN)n-1 hybrid + (n-1) diphosphate.. Functionally, RNA polymerase that catalyzes the synthesis of short RNA molecules used as primers for DNA polymerase during DNA replication. The protein is DNA primase of Rickettsia conorii (strain ATCC VR-613 / Malish 7).